A 270-amino-acid polypeptide reads, in one-letter code: ATP synthase subunit a (270 aa).

5 helical membrane passes run 37 to 57, 98 to 118, 143 to 163, 208 to 228, and 239 to 259; these read NVHI…LGVF, IAPL…MDLV, DVNI…YYSI, LFGN…MLPW, and AIFH…LTIV.

It belongs to the ATPase A chain family. As to quaternary structure, F-type ATPases have 2 components, CF(1) - the catalytic core - and CF(0) - the membrane proton channel. CF(1) has five subunits: alpha(3), beta(3), gamma(1), delta(1), epsilon(1). CF(0) has three main subunits: a(1), b(2) and c(9-12). The alpha and beta chains form an alternating ring which encloses part of the gamma chain. CF(1) is attached to CF(0) by a central stalk formed by the gamma and epsilon chains, while a peripheral stalk is formed by the delta and b chains.

Its subcellular location is the cell inner membrane. Its function is as follows. Key component of the proton channel; it plays a direct role in the translocation of protons across the membrane. The polypeptide is ATP synthase subunit a (Vibrio cholerae serotype O1 (strain ATCC 39315 / El Tor Inaba N16961)).